Here is a 309-residue protein sequence, read N- to C-terminus: Peptide methionine sulfoxide reductase MsrA/MsrB (309 aa).

The peptide methionine sulfoxide reductase A stretch occupies residues 1–153; it reads MIYLAEGCFW…PNGYCHIDIN (153 aa). Cysteine 8 is an active-site residue. Residues 170-293 enclose the MsrB domain; sequence ATEIKAKLSA…NSLSITFIPK (124 aa). Cysteine 282 (nucleophile) is an active-site residue.

This sequence in the N-terminal section; belongs to the MsrA Met sulfoxide reductase family. The protein in the C-terminal section; belongs to the MsrB Met sulfoxide reductase family.

The enzyme catalyses L-methionyl-[protein] + [thioredoxin]-disulfide + H2O = L-methionyl-(S)-S-oxide-[protein] + [thioredoxin]-dithiol. The catalysed reaction is [thioredoxin]-disulfide + L-methionine + H2O = L-methionine (S)-S-oxide + [thioredoxin]-dithiol. It carries out the reaction L-methionyl-[protein] + [thioredoxin]-disulfide + H2O = L-methionyl-(R)-S-oxide-[protein] + [thioredoxin]-dithiol. Functionally, has an important function as a repair enzyme for proteins that have been inactivated by oxidation. Catalyzes the reversible oxidation-reduction of methionine sulfoxide in proteins to methionine. The polypeptide is Peptide methionine sulfoxide reductase MsrA/MsrB (msrAB) (Streptococcus pyogenes serotype M3 (strain ATCC BAA-595 / MGAS315)).